The following is a 425-amino-acid chain: 5-nitroanthranilic acid aminohydrolase (425 aa).

Asp-88 is a catalytic residue. The active-site Proton acceptor is Glu-158.

This sequence belongs to the peptidase M20A family. Requires Co(2+) as cofactor. It depends on Mn(2+) as a cofactor. The cofactor is Zn(2+). Fe(2+) serves as cofactor. Ni(2+) is required as a cofactor.

It carries out the reaction 5-nitroanthranilate + H2O + H(+) = 5-nitrosalicylate + NH4(+). Its function is as follows. Catalyzes the deamination of 5-nitroanthranilate (5NAA) to 5-nitrosalicylate (5NSA), the first step in biodegradation of 5-nitroanthranilate. The protein is 5-nitroanthranilic acid aminohydrolase (naaA) of Bradyrhizobium sp.